The following is a 203-amino-acid chain: Small ribosomal subunit protein uS4 (203 aa).

An S4 RNA-binding domain is found at 93–173 (RRLDNVVFRS…FPSWIQVDKA (81 aa)).

It belongs to the universal ribosomal protein uS4 family. Part of the 30S ribosomal subunit. Contacts protein S5. The interaction surface between S4 and S5 is involved in control of translational fidelity.

One of the primary rRNA binding proteins, it binds directly to 16S rRNA where it nucleates assembly of the body of the 30S subunit. Functionally, with S5 and S12 plays an important role in translational accuracy. This chain is Small ribosomal subunit protein uS4, found in Chlorobium limicola (strain DSM 245 / NBRC 103803 / 6330).